The chain runs to 84 residues: Defensin-like protein 37 (84 aa).

The signal sequence occupies residues 1–24; the sequence is MAVKLIYLFLFLYIALLISGRTMS. 3 disulfides stabilise this stretch: cysteine 46/cysteine 67, cysteine 52/cysteine 79, and cysteine 56/cysteine 81.

This sequence belongs to the DEFL family.

Its subcellular location is the secreted. The protein is Defensin-like protein 37 (EDA21) of Arabidopsis thaliana (Mouse-ear cress).